We begin with the raw amino-acid sequence, 456 residues long: UDP-N-acetylmuramoylalanine--D-glutamate ligase (456 aa).

An ATP-binding site is contributed by 113–119; it reads GTNGKTT.

It belongs to the MurCDEF family.

It is found in the cytoplasm. The catalysed reaction is UDP-N-acetyl-alpha-D-muramoyl-L-alanine + D-glutamate + ATP = UDP-N-acetyl-alpha-D-muramoyl-L-alanyl-D-glutamate + ADP + phosphate + H(+). The protein operates within cell wall biogenesis; peptidoglycan biosynthesis. In terms of biological role, cell wall formation. Catalyzes the addition of glutamate to the nucleotide precursor UDP-N-acetylmuramoyl-L-alanine (UMA). This is UDP-N-acetylmuramoylalanine--D-glutamate ligase from Crocosphaera subtropica (strain ATCC 51142 / BH68) (Cyanothece sp. (strain ATCC 51142)).